The following is a 214-amino-acid chain: Leucyl/phenylalanyl-tRNA--protein transferase (214 aa).

This sequence belongs to the L/F-transferase family.

It is found in the cytoplasm. It carries out the reaction N-terminal L-lysyl-[protein] + L-leucyl-tRNA(Leu) = N-terminal L-leucyl-L-lysyl-[protein] + tRNA(Leu) + H(+). It catalyses the reaction N-terminal L-arginyl-[protein] + L-leucyl-tRNA(Leu) = N-terminal L-leucyl-L-arginyl-[protein] + tRNA(Leu) + H(+). The enzyme catalyses L-phenylalanyl-tRNA(Phe) + an N-terminal L-alpha-aminoacyl-[protein] = an N-terminal L-phenylalanyl-L-alpha-aminoacyl-[protein] + tRNA(Phe). In terms of biological role, functions in the N-end rule pathway of protein degradation where it conjugates Leu, Phe and, less efficiently, Met from aminoacyl-tRNAs to the N-termini of proteins containing an N-terminal arginine or lysine. The protein is Leucyl/phenylalanyl-tRNA--protein transferase of Cereibacter sphaeroides (strain KD131 / KCTC 12085) (Rhodobacter sphaeroides).